Here is a 285-residue protein sequence, read N- to C-terminus: Nucleotide-binding protein PSPTO_4456 (285 aa).

ATP is bound at residue 8–15 (GRSGSGKS). Residue 60 to 63 (DARN) participates in GTP binding.

The protein belongs to the RapZ-like family.

Displays ATPase and GTPase activities. The sequence is that of Nucleotide-binding protein PSPTO_4456 from Pseudomonas syringae pv. tomato (strain ATCC BAA-871 / DC3000).